The chain runs to 170 residues: Phosphopantetheine adenylyltransferase (170 aa).

Position 10 (T10) interacts with substrate. Residues 10 to 11 (TF) and H18 contribute to the ATP site. 3 residues coordinate substrate: K42, V79, and R93. ATP is bound by residues 94 to 96 (GLR), E104, and 129 to 135 (TQFISST).

Belongs to the bacterial CoaD family. In terms of assembly, homohexamer. It depends on Mg(2+) as a cofactor.

It localises to the cytoplasm. It catalyses the reaction (R)-4'-phosphopantetheine + ATP + H(+) = 3'-dephospho-CoA + diphosphate. It participates in cofactor biosynthesis; coenzyme A biosynthesis; CoA from (R)-pantothenate: step 4/5. Its function is as follows. Reversibly transfers an adenylyl group from ATP to 4'-phosphopantetheine, yielding dephospho-CoA (dPCoA) and pyrophosphate. This chain is Phosphopantetheine adenylyltransferase, found in Parvibaculum lavamentivorans (strain DS-1 / DSM 13023 / NCIMB 13966).